We begin with the raw amino-acid sequence, 578 residues long: MTIKSIISKHIKKVLNIIKIFITHEDLAIVRTSDKKVWDYQVNGIIKLANNLNKNPYVLSKYIISNMRYYEYKMYKKITASKLGFINIFINKTWLEKELTKKIKSFRLGIKKVTPKNIIIDYSSPNVAKKMHVGHLRSTILGDATARILEFLGHNVMRINHIGDWGTHFGMIIAYLKQNFISYNEINQLDLNELYQKAKVNFDLDSEFSKKTRNYVVKLQKKDKECIRIWKKIVKKTITENQKIYKKLNVTLTNKHIVGESFYNDMLPDIIQDLKTKKIAKQCNGAYIVFLNKFKNRDGAPMGVIIQKQDGAFLYSTIDLACLKYRCEVLRADQILYFIDSRQKEYLKQILEIAKKAGYISNNIIIRHNEFGMICSKNKRPFSTRSGNNIILSDLINEAIKRAKKIAKNKNKNLSNKELEYLSEKIGIGAIKYFDLSKNRLTDYIFKWDEILTFDGNTAPYMQYAYIRILSIFKKLNISMLKLSGNIILTELLENKLAIKLFQFEEIILESLQHSAPHIICKYLYELSKIFSKFYEKCSIYKSKNTKIRKNRLLLSLLTARTLKKGLFIIGISTIKYM.

The short motif at 125 to 135 is the 'HIGH' region element; sequence PNVAKKMHVGH.

It belongs to the class-I aminoacyl-tRNA synthetase family. Monomer.

It is found in the cytoplasm. The enzyme catalyses tRNA(Arg) + L-arginine + ATP = L-arginyl-tRNA(Arg) + AMP + diphosphate. The protein is Arginine--tRNA ligase of Buchnera aphidicola subsp. Baizongia pistaciae (strain Bp).